A 122-amino-acid polypeptide reads, in one-letter code: Probable glycine cleavage system H protein (122 aa).

One can recognise a Lipoyl-binding domain in the interval 23-104; the sequence is IATVGITDYA…PYGNWLVKMK (82 aa). Lys64 carries the N6-lipoyllysine modification.

The protein belongs to the GcvH family. The glycine cleavage system is composed of four proteins: P, T, L and H. The cofactor is (R)-lipoate.

Functionally, the glycine cleavage system catalyzes the degradation of glycine. The H protein shuttles the methylamine group of glycine from the P protein to the T protein. This Thermoplasma volcanium (strain ATCC 51530 / DSM 4299 / JCM 9571 / NBRC 15438 / GSS1) protein is Probable glycine cleavage system H protein.